Reading from the N-terminus, the 256-residue chain is Protein Ta0487 (256 aa).

Belongs to the CinA family.

This chain is Protein Ta0487, found in Thermoplasma acidophilum (strain ATCC 25905 / DSM 1728 / JCM 9062 / NBRC 15155 / AMRC-C165).